We begin with the raw amino-acid sequence, 1770 residues long: Serine/threonine-protein kinase RIM15 (1770 aa).

The tract at residues 334–358 is disordered; the sequence is HSLSTFPQDNGNNNNNNNNNNNNNN. Over residues 343–358 the composition is skewed to low complexity; the sequence is NGNNNNNNNNNNNNNN. Phosphoserine is present on residues Ser380 and Ser476. 2 disordered regions span residues 530 to 563 and 583 to 694; these read TPTANDIRHPSPLPRSCSNTVMKLPTPRRKLDSN and STIS…NSVL. Residues 583–601 are compositionally biased toward polar residues; that stretch reads STISIDRDNNTNSRGSSMK. Residues 611–632 are compositionally biased toward low complexity; the sequence is SRTSNSERPSSSSSRLGIRSRS. A compositionally biased stretch (basic and acidic residues) spans 637 to 660; sequence QKIEYSHVDNDDRTNEMLSRDKDS. Positions 669–692 are enriched in low complexity; sequence TTITSSTQATTTGTKTNSNNSTNS. Phosphothreonine is present on Thr704. 4 positions are modified to phosphoserine: Ser709, Ser733, Ser736, and Ser737. A Phosphothreonine modification is found at Thr747. Positions 794–1254 constitute a Protein kinase domain; the sequence is YDILKPISKG…IQEIKDHPYF (461 aa). Residues 800–808 and Lys823 each bind ATP; that span reads ISKGAYGSV. Asp918 serves as the catalytic Proton acceptor. The segment covering 970–980 has biased composition (low complexity); that stretch reads NNFTMNNNNSN. The tract at residues 970–1032 is disordered; sequence NNFTMNNNNS…MTPTPSTNTV (63 aa). A compositionally biased stretch (polar residues) spans 981–990; sequence HSQLSTPDSF. Over residues 1014-1031 the composition is skewed to low complexity; sequence YSSTSNSHSMTPTPSTNT. Residues Ser1044, Ser1048, and Ser1064 each carry the phosphoserine modification. The residue at position 1075 (Thr1075) is a Phosphothreonine; by PHO85. An AGC-kinase C-terminal domain is found at 1255-1320; that stretch reads KNVDWDHVYD…NTDVSELSAA (66 aa). The span at 1378 to 1391 shows a compositional bias: low complexity; the sequence is TGYITPNGTGTTTT. The tract at residues 1378–1403 is disordered; it reads TGYITPNGTGTTTTSAKNSPNLKNLS. Residues 1392 to 1401 show a composition bias toward polar residues; sequence SAKNSPNLKN. Ser1421 carries the phosphoserine modification. Disordered regions lie at residues 1448-1507 and 1519-1572; these read KSEH…STFG and FSTR…PANT. A compositionally biased stretch (low complexity) spans 1463–1481; sequence SSASLMGSSSDGSVSTPGS. A phosphoserine mark is found at Ser1531, Ser1538, Ser1542, and Ser1565. The Response regulatory domain maps to 1636 to 1750; it reads DVLVCEPIPI…ELKKLVAKYA (115 aa). Residue Ser1764 is modified to Phosphoserine.

It belongs to the protein kinase superfamily. Ser/Thr protein kinase family. Interacts with the cyclin-dependent kinase (CDK) PHO85 and IGO1. Post-translationally, autophosphorylated. Phosphorylation by PKA strongly inhibits kinase activity. Phosphorylation by cyclin-CDK PHO80-PHO85 under favorable growth condition causes inactivation of RIM15 by promoting its export to the cytoplasm.

The protein resides in the cytoplasm. It is found in the nucleus. The enzyme catalyses L-seryl-[protein] + ATP = O-phospho-L-seryl-[protein] + ADP + H(+). It carries out the reaction L-threonyl-[protein] + ATP = O-phospho-L-threonyl-[protein] + ADP + H(+). Its activity is regulated as follows. Kinase activity is inhibited by phosphorylation by cAMP-dependent protein kinase (PKA). In terms of biological role, protein kinase that positively regulates proper entry into stationary phase of cells under nutrient starvation conditions. Involved in glycogen and trehalose accumulation, derepression of stress-induced genes, induction of thermotolerance and starvation resistance, and proper G1 cell cycle arrest. Also involved in the activation of a meiotic genes activation pathway. Phosphorylates IGO1 and IGO2, both involved in the TORC1 control of gene expression and chronological life span. The sequence is that of Serine/threonine-protein kinase RIM15 (RIM15) from Saccharomyces cerevisiae (strain ATCC 204508 / S288c) (Baker's yeast).